The chain runs to 97 residues: Down syndrome critical region protein 8 (97 aa).

In terms of tissue distribution, expressed in numerous tissues; not found in breast, heart, small intestine and liver. Isoform 1: Predominantly expressed in the testis. Isoform 3: Predominantly expressed in the testis, at lower level in the placenta, during malignant progression of melanocytic tumors and in several tumors of varying origins. Isoform 4: Predominantly expressed in the testis, at lower level in the placenta, during malignant progression of melanocytic tumors and in several tumors of varying origins. Isoform 5: Predominantly expressed in the testis. Isoform 6: Predominantly expressed in the testis.

In Homo sapiens (Human), this protein is Down syndrome critical region protein 8.